The following is a 321-amino-acid chain: MAQVLRGTVADFPGFDERADAETLRKAMKGLGTDEETILTLLTSRSNAQRQEIAVAFKTLFGRDLLDDLKSELTGKFEKLIVALMKPSRLYDAYELKHALKGAGTDEKVLTEIIASRTPEELRAIEQVYEEEYGSSLEDDVVGDTSGYYQRMLVVLLQANRDPDARIDEAQVEQDAQALFQAGELKWGTDEEKFITIFGTRSVSHLRRVFDKYMTISGFQIEETIDRETSGNLEQLLLAVVKSIRSIPAYLAETLYYAMKGAGTDDHTLIRVVVSRSEIDLYNIRKEFRKNFGTSLYSMIKGDTSGDYKKALLLLCGGEDD.

Ala2 carries the N-acetylalanine modification. Annexin repeat units follow at residues 15–86 (FDER…ALMK), 87–158 (PSRL…VLLQ), 170–242 (AQVE…AVVK), and 246–317 (SIPA…LLCG). Lys29 is covalently cross-linked (Glycyl lysine isopeptide (Lys-Gly) (interchain with G-Cter in SUMO1); alternate). Lys29 participates in a covalent cross-link: Glycyl lysine isopeptide (Lys-Gly) (interchain with G-Cter in SUMO2); alternate. N6-acetyllysine occurs at positions 70, 76, 79, 97, and 101. Position 290 is an N6-succinyllysine (Lys290). The short motif at 314–320 (LLCGGED) is the [IL]-x-C-x-x-[DE] motif element.

Belongs to the annexin family. In terms of assembly, monomer. Binds ATRX and EIF5B. In terms of processing, S-nitrosylation is induced by interferon-gamma and oxidatively-modified low-densitity lipoprotein (LDL(ox)) possibly implicating the iNOS-S100A8/9 transnitrosylase complex.

Its function is as follows. This protein is an anticoagulant protein that acts as an indirect inhibitor of the thromboplastin-specific complex, which is involved in the blood coagulation cascade. The chain is Annexin A5 (ANXA5) from Bos taurus (Bovine).